A 241-amino-acid polypeptide reads, in one-letter code: Superantigen-like protein 13 (241 aa).

An N-terminal signal peptide occupies residues 1 to 26; it reads MNNNITKKIILSTTLLLLGTASTQFP.

The protein belongs to the staphylococcal/streptococcal toxin family. Interacts with host FPR2; this interaction promotes neutrophil chemotaxis.

Functionally, acts as a pathogen alarming molecule by acting on host neutrophil chemotactic factors FPR2. Plays a role of chemoattractant and induces degranulation and oxidative burst in neutrophils. This Staphylococcus aureus (strain Newman) protein is Superantigen-like protein 13.